The sequence spans 306 residues: Polyphosphate kinase PPK2B (306 aa).

This sequence belongs to the polyphosphate kinase 2 (PPK2) family. Class I subfamily. As to quaternary structure, homotetramer. Requires Mn(2+) as cofactor.

It carries out the reaction [phosphate](n) + ATP = [phosphate](n+1) + ADP. The enzyme catalyses [phosphate](n) + GTP = [phosphate](n+1) + GDP. Its function is as follows. Catalyzes the synthesis of polyP from ATP or GTP. Can also use inorganic polyphosphate (polyP) as a donor to convert ADP to ATP, but the activity is 10-fold higher in vitro for polyP synthesis than for ATP formation. This chain is Polyphosphate kinase PPK2B, found in Corynebacterium glutamicum (strain ATCC 13032 / DSM 20300 / JCM 1318 / BCRC 11384 / CCUG 27702 / LMG 3730 / NBRC 12168 / NCIMB 10025 / NRRL B-2784 / 534).